Consider the following 514-residue polypeptide: Protein translocase subunit SecD (514 aa).

5 helical membrane-spanning segments follow: residues 7–27 (WKIF…LPNF), 357–377 (IIGF…LGLF), 389–409 (VLAL…AGII), 448–470 (FATI…IFGV), and 482–502 (IGII…IDIW).

This sequence belongs to the SecD/SecF family. SecD subfamily. In terms of assembly, forms a complex with SecF. Part of the essential Sec protein translocation apparatus which comprises SecA, SecYEG and auxiliary proteins SecDF-YajC and YidC.

It localises to the cell inner membrane. Its function is as follows. Part of the Sec protein translocase complex. Interacts with the SecYEG preprotein conducting channel. SecDF uses the proton motive force (PMF) to complete protein translocation after the ATP-dependent function of SecA. The protein is Protein translocase subunit SecD of Rickettsia bellii (strain RML369-C).